Reading from the N-terminus, the 670-residue chain is Leucine-rich repeat-containing protein 45 (670 aa).

5 LRR repeats span residues 87-108 (TVKSLDLKGNNLRTTGAEALGK), 115-136 (SIRSLILEWNSLGVWEEGFSFF), 145-166 (FLQRLDLRNNQINHHGAGELAM), 173-194 (SLQELDLRWNNIGLLGGRALLN), and 201-223 (TLKKLELAGNNVPSDILKAVEQA). A coiled-coil region spans residues 234–645 (LSETQNRTSV…ISRMKEEEAQ (412 aa)).

As to quaternary structure, homomer.

It localises to the cytoplasm. It is found in the cytoskeleton. Its subcellular location is the microtubule organizing center. The protein resides in the centrosome. Functionally, component of the proteinaceous fiber-like linker between two centrioles, required for centrosome cohesion. This chain is Leucine-rich repeat-containing protein 45 (LRRC45), found in Gallus gallus (Chicken).